The following is a 124-amino-acid chain: Photoactive yellow protein (124 aa).

In terms of domain architecture, PAS spans 22–85; the sequence is AESLPFGAVL…GEFLKFNRTG (64 aa). At cysteine 68 the chain carries S-(4-hydroxycinnamyl)cysteine.

Belongs to the photoactive yellow protein family. In terms of processing, the 4-hydroxycinnamic acid (p-coumaric acid) chromophore is covalently bound via a thioester linkage.

Functionally, this photoactive protein is a photoreceptor with kinetics similar to that of rhodopsin. The polypeptide is Photoactive yellow protein (pyp) (Rhodobacter capsulatus (strain ATCC BAA-309 / NBRC 16581 / SB1003)).